Reading from the N-terminus, the 1233-residue chain is MASPPDTDGFSDVRKVGYLRKPKSMHKRFFVLRAASEAGGPARLEYYENEKKWRHKSSAPKRSIPLESCFNINKRADSKNKHLVALYTRDEHFAIAADSEAEQDSWYQALLQLHNRAKAHHDGAGGGCGGSCSGSSGVGEAGEDLSYDTGPGPAFKEVWQVILKPKGLGQTKNLIGIYRLCLTSKTISFVKLNSEAAAVVLQLMNIRRCGHSENFFFIEVGRSAVTGPGEFWMQVDDSVVAQNMHETILEAMRAMSDEFRPRSKSQSSSSCSNPISVPLRRHHLNNPPPSQVGLTRRSRTESITATSPASMVGGKPGSFRVRASSDGEGTMSRPASVDGSPVSPSTNRTHAHRHRGSSRLHPPLNHSRSIPMPSSRCSPSATSPVSLSSSSTSGHGSTSDCLFPRRSSASVSGSPSDGGFISSDEYGSSPCDFRSSFRSVTPDSLGHTPPARGEEELSNYICMGGKGASTLAAPNGHYILSRGGNGHRYIPGANLGTSPALPGDEAAGAADLDNRFRKRTHSAGTSPTISHQKTPSQSSVASIEEYTEMMPAAYPPGGGSGGRLPGYRHSAFVPTHSYPEEGLEMHHLERRGGHHRPDTSNLHTDDGYMPMSPGVAPVPSNRKGNGDYMPMSPKSVSAPQQIINPIRRHPQRVDPNGYMMMSPSGSCSPDIGGGSSSSSSISAAPSGSSYGKPWTNGVGGHHTHALPHAKPPVESGGGKLLPCTGDYMNMSPVGDSNTSSPSECYYGPEDPQHKPVLSYYSLPRSFKHTQRPGEPEEGARHQHLRLSSSSGRLRYTATAEDSSSSTSSDSLGGGYCGARPESSLTHPHHHVLQPHLPRKVDTAAQTNSRLARPTRLSLGDPKASTLPRVREQQQQQQSSLHPPEPKSPGEYVNIEFGSGQPGYLAGPATSRSSPSVRCPPQLHPAPREETGSEEYMNMDLGPGRRATWQESGGVELGRIGPAPPGSATVCRPTRSVPNSRGDYMTMQIGCPRQSYVDTSPVAPVSYADMRTGIAAEKASLPRPTGAAPPPSSTASSSASVTPQGATAEQATHSSLLGGPQGPGGMSAFTRVNLSPNHNQSAKVIRADTQGCRRRHSSETFSAPTRAGNTVPFGAGAAVGGSGGGGGGGSEDVKRHSSASFENVWLRPGDLGGVSKESAPVCGAAGGLEKSLNYIDLDLAKEHSQDCPSQQQSLPPPPPHQPLGSNEGNSPRRSSEDLSNYASISFQKQPEDRQ.

A Phosphoserine modification is found at Ser-3. Residues 3 to 133 (SPPDTDGFSD…AGGGCGGSCS (131 aa)) form a mediates interaction with PHIP region. The region spanning 12–115 (DVRKVGYLRK…WYQALLQLHN (104 aa)) is the PH domain. Ser-99 is modified (phosphoserine; by CK2). The IRS-type PTB domain occupies 155 to 259 (FKEVWQVILK…EAMRAMSDEF (105 aa)). Residues 257 to 425 (DEFRPRSKSQ…SDGGFISSDE (169 aa)) are disordered. Residues 264-276 (KSQSSSSCSNPIS) are compositionally biased toward low complexity. Residues Ser-265 and Ser-302 each carry the phosphoserine; by RPS6KB1 modification. Ser-307 is subject to Phosphoserine; by IKKB, MAPK8 and RPS6KB1. Phosphoserine is present on residues Ser-318, Ser-325, Ser-340, and Ser-343. The segment covering 349-358 (THAHRHRGSS) has biased composition (basic residues). Low complexity-rich tracts occupy residues 378 to 399 (SPSATSPVSLSSSSTSGHGSTS) and 407 to 419 (SSASVSGSPSDGG). Ser-414 bears the Phosphoserine mark. A phosphothreonine mark is found at Thr-441 and Thr-448. Position 460 is a phosphotyrosine; by INSR (Tyr-460). The YXXM motif 1 signature appears at 460–463 (YICM). The residue at position 522 (Ser-522) is a Phosphoserine; by RPS6KB1. Short sequence motifs (YXXM motif) lie at residues 546–549 (YTEM) and 608–611 (YMPM). A Phosphotyrosine; by INSR modification is found at Tyr-608. Ser-612 is modified (phosphoserine). Position 628 is a phosphotyrosine; by INSR (Tyr-628). Residues 628 to 631 (YMPM) carry the YXXM motif 4 motif. Position 632 is a phosphoserine; by RPS6KB1 and ROCK2 (Ser-632). A disordered region spans residues 651-720 (QRVDPNGYMM…PPVESGGGKL (70 aa)). Tyr-658 carries the phosphotyrosine modification. The YXXM motif 5 signature appears at 658-661 (YMMM). A compositionally biased stretch (low complexity) spans 662-689 (SPSGSCSPDIGGGSSSSSSISAAPSGSS). Positions 727-730 (YMNM) match the YXXM motif 6 motif. The interval 766 to 985 (FKHTQRPGEP…VPNSRGDYMT (220 aa)) is disordered. A compositionally biased stretch (basic and acidic residues) spans 771 to 780 (RPGEPEEGAR). Low complexity-rich tracts occupy residues 785–794 (RLSSSSGRLR) and 801–810 (DSSSSTSSDS). A Phosphoserine; by AMPK and SIK2 modification is found at Ser-789. Ser-887 carries the post-translational modification Phosphoserine. Residues Tyr-891, Tyr-935, and Tyr-983 each carry the phosphotyrosine; by INSR modification. The segment at 891 to 893 (YVN) is GRB2-binding. 3 short sequence motifs (YXXM motif) span residues 935 to 938 (YMNM), 983 to 986 (YMTM), and 1006 to 1009 (YADM). The segment at 1015-1137 (AEKASLPRPT…GSEDVKRHSS (123 aa)) is disordered. Over residues 1032 to 1042 (STASSSASVTP) the composition is skewed to low complexity. Composition is skewed to polar residues over residues 1043–1052 (QGATAEQATH) and 1069–1081 (TRVNLSPNHNQSA). Ser-1096 and Ser-1097 each carry phosphoserine. Residues 1116-1129 (AAVGGSGGGGGGGS) show a composition bias toward gly residues. A Phosphotyrosine; by INSR modification is found at Tyr-1173. The segment at 1178–1233 (LAKEHSQDCPSQQQSLPPPPPHQPLGSNEGNSPRRSSEDLSNYASISFQKQPEDRQ) is disordered. Residue Lys-1180 forms a Glycyl lysine isopeptide (Lys-Gly) (interchain with G-Cter in ubiquitin) linkage. A compositionally biased stretch (polar residues) spans 1203 to 1227 (GSNEGNSPRRSSEDLSNYASISFQK). Tyr-1220 carries the phosphotyrosine; by INSR modification.

In terms of assembly, interacts (via phosphorylated YXXM motifs) with PIK3R1. Interacts with ROCK1. Interacts with GRB2. Interacts with SOCS7. Interacts (via IRS-type PTB domain) with IGF1R and INSR (via the tyrosine-phosphorylated NPXY motif). Interacts with UBTF and PIK3CA. Interacts (via PH domain) with PHIP. Interacts with FER. Interacts with ALK. Interacts with EIF2AK2/PKR. Interacts with GKAP1. Interacts with DGKZ in the absence of insulin; insulin stimulation decreases this interaction. Found in a ternary complex with DGKZ and PIP5K1A in the absence of insulin stimulation. Interacts with SQSTM1; the interaction is disrupted by the presence of tensin TNS2. Interacts with NCK1 (via SH2 domain). Interacts with NCK2 (via SH3 domain). Interacts with SH2B1; this interaction enhances leptin-induced activation of the PI3-kinase pathway. Interacts with DVL2; this interaction promotes the Wnt/beta-catenin signaling pathway. In terms of processing, serine phosphorylation of IRS1 is a mechanism for insulin resistance. Ser-307 phosphorylation inhibits insulin action through disruption of IRS1 interaction with the insulin receptor. Phosphorylation of Tyr-891 is required for GRB2-binding. Phosphorylated by ALK. Phosphorylated at Ser-265, Ser-302, Ser-632 and Ser-1097 by RPS6KB1; phosphorylation induces accelerated degradation of IRS1. Phosphorylated on tyrosine residues in response to insulin. In skeletal muscles, dephosphorylated on Tyr-608 by TNS2 under anabolic conditions; dephosphorylation results in the proteasomal degradation of IRS1. Ubiquitinated by the Cul7-RING(FBXW8) complex in a mTOR-dependent manner, leading to its degradation: the Cul7-RING(FBXW8) complex recognizes and binds IRS1 previously phosphorylated by S6 kinase (RPS6KB1 or RPS6KB2). Ubiquitinated by TRAF4 through 'Lys-29' linkage; this ubiquitination regulates the interaction of IRS1 with IGFR and IRS1 tyrosine phosphorylation upon IGF1 stimulation. Post-translationally, S-nitrosylation at by BLVRB inhibits its activity. As to expression, expressed in osteoblasts, but not in osteoclasts.

The protein resides in the cytoplasm. It localises to the nucleus. Functionally, signaling adapter protein that participates in the signal transduction from two prominent receptor tyrosine kinases, insulin receptor/INSR and insulin-like growth factor I receptor/IGF1R. Plays therefore an important role in development, growth, glucose homeostasis as well as lipid metabolism. Upon phosphorylation by the insulin receptor, functions as a signaling scaffold that propagates insulin action through binding to SH2 domain-containing proteins including the p85 regulatory subunit of PI3K, NCK1, NCK2, GRB2 or SHP2. Recruitment of GRB2 leads to the activation of the guanine nucleotide exchange factor SOS1 which in turn triggers the Ras/Raf/MEK/MAPK signaling cascade. Activation of the PI3K/AKT pathway is responsible for most of insulin metabolic effects in the cell, and the Ras/Raf/MEK/MAPK is involved in the regulation of gene expression and in cooperation with the PI3K pathway regulates cell growth and differentiation. Acts a positive regulator of the Wnt/beta-catenin signaling pathway through suppression of DVL2 autophagy-mediated degradation leading to cell proliferation. The protein is Insulin receptor substrate 1 (Irs1) of Mus musculus (Mouse).